We begin with the raw amino-acid sequence, 571 residues long: Proline--tRNA ligase (571 aa).

This sequence belongs to the class-II aminoacyl-tRNA synthetase family. ProS type 1 subfamily. Homodimer.

It is found in the cytoplasm. It carries out the reaction tRNA(Pro) + L-proline + ATP = L-prolyl-tRNA(Pro) + AMP + diphosphate. In terms of biological role, catalyzes the attachment of proline to tRNA(Pro) in a two-step reaction: proline is first activated by ATP to form Pro-AMP and then transferred to the acceptor end of tRNA(Pro). As ProRS can inadvertently accommodate and process non-cognate amino acids such as alanine and cysteine, to avoid such errors it has two additional distinct editing activities against alanine. One activity is designated as 'pretransfer' editing and involves the tRNA(Pro)-independent hydrolysis of activated Ala-AMP. The other activity is designated 'posttransfer' editing and involves deacylation of mischarged Ala-tRNA(Pro). The misacylated Cys-tRNA(Pro) is not edited by ProRS. This chain is Proline--tRNA ligase, found in Histophilus somni (strain 129Pt) (Haemophilus somnus).